We begin with the raw amino-acid sequence, 504 residues long: Deoxyguanosinetriphosphate triphosphohydrolase (504 aa).

In terms of domain architecture, HD spans 66–273 (RLTHSLEVQQ…MEAADDISYC (208 aa)).

This sequence belongs to the dGTPase family. Type 1 subfamily. In terms of assembly, homotetramer. Mg(2+) serves as cofactor.

It carries out the reaction dGTP + H2O = 2'-deoxyguanosine + triphosphate + H(+). In terms of biological role, dGTPase preferentially hydrolyzes dGTP over the other canonical NTPs. This chain is Deoxyguanosinetriphosphate triphosphohydrolase, found in Klebsiella pneumoniae (strain 342).